The sequence spans 232 residues: Phosphatidylserine decarboxylase proenzyme (232 aa).

Residue Ser190 is the Schiff-base intermediate with substrate; via pyruvic acid of the active site. Ser190 is modified (pyruvic acid (Ser); by autocatalysis).

Belongs to the phosphatidylserine decarboxylase family. PSD-A subfamily. In terms of assembly, heterodimer of a large membrane-associated beta subunit and a small pyruvoyl-containing alpha subunit. Pyruvate serves as cofactor. Is synthesized initially as an inactive proenzyme. Formation of the active enzyme involves a self-maturation process in which the active site pyruvoyl group is generated from an internal serine residue via an autocatalytic post-translational modification. Two non-identical subunits are generated from the proenzyme in this reaction, and the pyruvate is formed at the N-terminus of the alpha chain, which is derived from the carboxyl end of the proenzyme. The post-translation cleavage follows an unusual pathway, termed non-hydrolytic serinolysis, in which the side chain hydroxyl group of the serine supplies its oxygen atom to form the C-terminus of the beta chain, while the remainder of the serine residue undergoes an oxidative deamination to produce ammonia and the pyruvoyl prosthetic group on the alpha chain.

The protein localises to the cell membrane. The enzyme catalyses a 1,2-diacyl-sn-glycero-3-phospho-L-serine + H(+) = a 1,2-diacyl-sn-glycero-3-phosphoethanolamine + CO2. The protein operates within phospholipid metabolism; phosphatidylethanolamine biosynthesis; phosphatidylethanolamine from CDP-diacylglycerol: step 2/2. Its function is as follows. Catalyzes the formation of phosphatidylethanolamine (PtdEtn) from phosphatidylserine (PtdSer). In Rhizobium etli (strain CIAT 652), this protein is Phosphatidylserine decarboxylase proenzyme.